Consider the following 303-residue polypeptide: UDP-N-acetylenolpyruvoylglucosamine reductase (303 aa).

An FAD-binding PCMH-type domain is found at 23 to 188 (KVGGPADYLV…ISAKFALKPG (166 aa)). Residue R167 is part of the active site. Catalysis depends on S217, which acts as the Proton donor. E287 is a catalytic residue.

This sequence belongs to the MurB family. FAD serves as cofactor.

The protein resides in the cytoplasm. It catalyses the reaction UDP-N-acetyl-alpha-D-muramate + NADP(+) = UDP-N-acetyl-3-O-(1-carboxyvinyl)-alpha-D-glucosamine + NADPH + H(+). It functions in the pathway cell wall biogenesis; peptidoglycan biosynthesis. Cell wall formation. This is UDP-N-acetylenolpyruvoylglucosamine reductase from Streptococcus uberis (strain ATCC BAA-854 / 0140J).